A 153-amino-acid polypeptide reads, in one-letter code: Ribosomal RNA large subunit methyltransferase H (153 aa).

S-adenosyl-L-methionine-binding positions include L71, G102, and 121 to 126 (LSRMTL).

This sequence belongs to the RNA methyltransferase RlmH family. Homodimer.

It is found in the cytoplasm. The enzyme catalyses pseudouridine(1915) in 23S rRNA + S-adenosyl-L-methionine = N(3)-methylpseudouridine(1915) in 23S rRNA + S-adenosyl-L-homocysteine + H(+). Specifically methylates the pseudouridine at position 1915 (m3Psi1915) in 23S rRNA. This Anaeromyxobacter sp. (strain Fw109-5) protein is Ribosomal RNA large subunit methyltransferase H.